Consider the following 344-residue polypeptide: DNA-directed RNA polymerase subunit alpha (344 aa).

The tract at residues 1–238 (MKVIKTAPLI…KQLGVFGERP (238 aa)) is alpha N-terminal domain (alpha-NTD). Residues 253–344 (DAKDLSAKIE…EKLEDKGGND (92 aa)) form an alpha C-terminal domain (alpha-CTD) region.

This sequence belongs to the RNA polymerase alpha chain family. As to quaternary structure, homodimer. The RNAP catalytic core consists of 2 alpha, 1 beta, 1 beta' and 1 omega subunit. When a sigma factor is associated with the core the holoenzyme is formed, which can initiate transcription.

It carries out the reaction RNA(n) + a ribonucleoside 5'-triphosphate = RNA(n+1) + diphosphate. In terms of biological role, DNA-dependent RNA polymerase catalyzes the transcription of DNA into RNA using the four ribonucleoside triphosphates as substrates. The polypeptide is DNA-directed RNA polymerase subunit alpha (Helicobacter pylori (strain HPAG1)).